We begin with the raw amino-acid sequence, 129 residues long: Virion-associated protein (129 aa).

2 coiled-coil regions span residues 1–31 (MANL…ILEL) and 38–59 (IKES…LIND). A capsid binding region spans residues 122-129 (PAGWPNQF).

Belongs to the caulimovirus ORF III family. Homotetramer, through coiled-coil domain. Homotrimer when bound on icosehadral capsid. Interacts with capsid protein, and with movement protein.

The protein localises to the virion. It localises to the host cell junction. It is found in the host plasmodesma. In terms of biological role, plays a role in virus cell-to-cell and plant-to-plant transmission. Interacts with virion icosahedral capsid and movement protein, thereby facilitating virion cell-to-cell transmission through plasmodesmata opened by viral movement protein. Also interacts with aphid transmission factor, attaching the virion to aphid stylet when the animal feeds on an virus infected plant. Aphid saliva may later detach the virion, inducing release of infectious particles when the animal feeds on a new plant. The protein is Virion-associated protein of Cauliflower mosaic virus (strain Strasbourg) (CaMV).